Consider the following 310-residue polypeptide: Probable metallo-hydrolase Mb2322c (310 aa).

The disordered stretch occupies residues 1–29; the sequence is MVATRGRPCPTNFSRPQRPRVAGNGTKSQ. Zn(2+) contacts are provided by His137, Asp139, Asp141, His142, His221, Asp242, and His288.

This sequence belongs to the metallo-beta-lactamase superfamily. The cofactor is Zn(2+).

This is Probable metallo-hydrolase Mb2322c from Mycobacterium bovis (strain ATCC BAA-935 / AF2122/97).